Reading from the N-terminus, the 303-residue chain is Probable 5-dehydro-4-deoxyglucarate dehydratase (303 aa).

It belongs to the DapA family.

It catalyses the reaction 5-dehydro-4-deoxy-D-glucarate + H(+) = 2,5-dioxopentanoate + CO2 + H2O. The protein operates within carbohydrate acid metabolism; D-glucarate degradation; 2,5-dioxopentanoate from D-glucarate: step 2/2. The sequence is that of Probable 5-dehydro-4-deoxyglucarate dehydratase from Ectopseudomonas mendocina (strain ymp) (Pseudomonas mendocina).